The sequence spans 189 residues: Large ribosomal subunit protein uL5 (189 aa).

Belongs to the universal ribosomal protein uL5 family. In terms of assembly, part of the 50S ribosomal subunit; part of the 5S rRNA/L5/L18/L25 subcomplex. Contacts the 5S rRNA and the P site tRNA. Forms a bridge to the 30S subunit in the 70S ribosome.

This is one of the proteins that bind and probably mediate the attachment of the 5S RNA into the large ribosomal subunit, where it forms part of the central protuberance. In the 70S ribosome it contacts protein S13 of the 30S subunit (bridge B1b), connecting the 2 subunits; this bridge is implicated in subunit movement. Contacts the P site tRNA; the 5S rRNA and some of its associated proteins might help stabilize positioning of ribosome-bound tRNAs. The chain is Large ribosomal subunit protein uL5 from Kocuria rhizophila (strain ATCC 9341 / DSM 348 / NBRC 103217 / DC2201).